The following is a 420-amino-acid chain: Histidine--tRNA ligase, chloroplastic (420 aa).

The protein belongs to the class-II aminoacyl-tRNA synthetase family.

The protein localises to the plastid. Its subcellular location is the chloroplast. The enzyme catalyses tRNA(His) + L-histidine + ATP = L-histidyl-tRNA(His) + AMP + diphosphate + H(+). The chain is Histidine--tRNA ligase, chloroplastic from Gracilaria tenuistipitata var. liui (Red alga).